The sequence spans 1216 residues: MKLIPFLSEEEIQKLQEAEANSSKEQKKTAEQIEAIYTSAQNILVSASAGSGKTFVMAERILDQLARGVEISQLFISTFTVKAATELKERLEKKISKKIQETDDVDLKQHLGRQLADLPNAAIGTMDSFTQKFLGKHGYLLDIAPNFRILQNQSEQLILENEVFHEVFEAHYQGKQKETFSHLLKNFAGRGKDERGLRQQVYKIYDFLQSTSNPQKWLSESFLKGFEKADFTSEKEKLTEQIKQALWDLESFFRYHLDNDAKEFAKAAYLENVQLILDEIGSLNQESDSQAYQAVLARVVAISKEKNGRALTNASRKADLKPLADAYNEERKTQFAKLGQLSDQIAILDYQERYHGDTWKLAKTFQSFMSDFVEAYRQRKRQENAFEFADISHYTIEILENFPQVRESYQERFHEVMVDEYQDTNHIQERMLELLSNGHNRFMVGDIKQSIYRFRQADPQIFNEKFQRYAQNPQEGRLIILKENFRSSSEVLSATNDVFERLMDQEVGEINYDNKHQLVFANTKLTPNPDNKAAFLLYDKDDTGEEEESQTETKLTGEMRLVIKEILKLHQEKGVAFKEIALLTSSRSRNDQILLALSEYGIPVKTDGEQNNYLQSLEVQVMLDTLRVIHNPLQDYALVALMKSPMFGFDEDELARLSLQKAEDKVHENLYEKLVNAQKMASSQKGLIHTALAEKLKQFMDILASWRLYAKTHSLYDLIWKIYNDRFYYDYVGALPNGPARQANLYALALRADQFEKSNFKGLSRFIRMIDQVLEAQHDLASVAVAPPKDAVELMTIHKSKGLEFPYVFILNMDQDFNKQDSMSEVILSRQNGLGVKYIAKMETGAVEDHYPKTIKLSIPSLTYRQNEEELQLASYSEQMRLLYVAMTRAEKKLYLVGKGSREKLESKEYPAAKNGKLNSNTRLQARNFQDWLWAISKVFTKDKLNFSYRFIGEDQLTREAIGELETKSPLQDSSQADNRQSDTIKEALEMLKEVEVYNTLHRAAIELPSVQTPSQIKKFYEPVMDMEGVEIAGQGQSVGKKISFDLPDFSTKEKVTGAEIGSATHELMQRIDLSQQLTLASLTETLKQVQTSQAVRDKINLDKILAFFDTVLGQEILANTDHLYREQPFSMLKRDQKSQEDFVVRGILDGYLLYENKIVLFDYKTDRYDEPSQLVDRYRGQLALYEEALSRAYSIENIEKYLILLGKDEVQVVKV.

Residues 26–488 (QKKTAEQIEA…IILKENFRSS (463 aa)) form the UvrD-like helicase ATP-binding domain. An ATP-binding site is contributed by 47–54 (ASAGSGKT). The region spanning 515 to 802 (KHQLVFANTK…ELMTIHKSKG (288 aa)) is the UvrD-like helicase C-terminal domain.

It belongs to the helicase family. AddA subfamily. Heterodimer of AddA and AddB/RexB. Mg(2+) serves as cofactor.

It catalyses the reaction Couples ATP hydrolysis with the unwinding of duplex DNA by translocating in the 3'-5' direction.. The catalysed reaction is ATP + H2O = ADP + phosphate + H(+). The heterodimer acts as both an ATP-dependent DNA helicase and an ATP-dependent, dual-direction single-stranded exonuclease. Recognizes the chi site generating a DNA molecule suitable for the initiation of homologous recombination. The AddA nuclease domain is required for chi fragment generation; this subunit has the helicase and 3' -&gt; 5' nuclease activities. The sequence is that of ATP-dependent helicase/nuclease subunit A from Streptococcus pneumoniae serotype 2 (strain D39 / NCTC 7466).